The following is a 288-amino-acid chain: tRNA (guanine-N(1)-)-methyltransferase (288 aa).

The interval Ala-82–Ala-105 is disordered. Positions Ser-89–Ala-105 are enriched in low complexity. S-adenosyl-L-methionine is bound by residues Gly-137 and Ile-162 to Leu-167.

It belongs to the RNA methyltransferase TrmD family. As to quaternary structure, homodimer.

The protein localises to the cytoplasm. It catalyses the reaction guanosine(37) in tRNA + S-adenosyl-L-methionine = N(1)-methylguanosine(37) in tRNA + S-adenosyl-L-homocysteine + H(+). Its function is as follows. Specifically methylates guanosine-37 in various tRNAs. The chain is tRNA (guanine-N(1)-)-methyltransferase from Bifidobacterium longum (strain DJO10A).